Consider the following 429-residue polypeptide: Phosphoribosylamine--glycine ligase (429 aa).

Residues Lys-109 to Asp-316 enclose the ATP-grasp domain. Residue Leu-135 to Ser-196 participates in ATP binding. The tract at residues Met-209–Gly-231 is disordered. Residues Glu-286 and Asn-288 each coordinate Mg(2+).

The protein belongs to the GARS family. The cofactor is Mg(2+). Requires Mn(2+) as cofactor.

The enzyme catalyses 5-phospho-beta-D-ribosylamine + glycine + ATP = N(1)-(5-phospho-beta-D-ribosyl)glycinamide + ADP + phosphate + H(+). The protein operates within purine metabolism; IMP biosynthesis via de novo pathway; N(1)-(5-phospho-D-ribosyl)glycinamide from 5-phospho-alpha-D-ribose 1-diphosphate: step 2/2. This chain is Phosphoribosylamine--glycine ligase, found in Pasteurella multocida (strain Pm70).